The chain runs to 499 residues: Bifunctional purine biosynthesis protein PurH (499 aa).

An MGS-like domain is found at 1–144; that stretch reads MIKRALISVF…KNFKDVVVLT (144 aa).

Belongs to the PurH family.

It carries out the reaction (6R)-10-formyltetrahydrofolate + 5-amino-1-(5-phospho-beta-D-ribosyl)imidazole-4-carboxamide = 5-formamido-1-(5-phospho-D-ribosyl)imidazole-4-carboxamide + (6S)-5,6,7,8-tetrahydrofolate. It catalyses the reaction IMP + H2O = 5-formamido-1-(5-phospho-D-ribosyl)imidazole-4-carboxamide. It functions in the pathway purine metabolism; IMP biosynthesis via de novo pathway; 5-formamido-1-(5-phospho-D-ribosyl)imidazole-4-carboxamide from 5-amino-1-(5-phospho-D-ribosyl)imidazole-4-carboxamide (10-formyl THF route): step 1/1. Its pathway is purine metabolism; IMP biosynthesis via de novo pathway; IMP from 5-formamido-1-(5-phospho-D-ribosyl)imidazole-4-carboxamide: step 1/1. The polypeptide is Bifunctional purine biosynthesis protein PurH (Clostridium botulinum (strain Kyoto / Type A2)).